A 145-amino-acid polypeptide reads, in one-letter code: 3-dehydroquinate dehydratase (145 aa).

The active-site Proton acceptor is the tyrosine 24. Residues asparagine 76, histidine 82, and aspartate 89 each coordinate substrate. Histidine 102 serves as the catalytic Proton donor. Residues 103–104 (LS) and arginine 113 contribute to the substrate site.

Belongs to the type-II 3-dehydroquinase family. As to quaternary structure, homododecamer.

The catalysed reaction is 3-dehydroquinate = 3-dehydroshikimate + H2O. The protein operates within metabolic intermediate biosynthesis; chorismate biosynthesis; chorismate from D-erythrose 4-phosphate and phosphoenolpyruvate: step 3/7. Catalyzes a trans-dehydration via an enolate intermediate. The sequence is that of 3-dehydroquinate dehydratase from Nitrosomonas eutropha (strain DSM 101675 / C91 / Nm57).